The primary structure comprises 151 residues: Ribosome maturation factor RimP (151 aa).

It belongs to the RimP family.

Its subcellular location is the cytoplasm. In terms of biological role, required for maturation of 30S ribosomal subunits. The polypeptide is Ribosome maturation factor RimP (Synechocystis sp. (strain ATCC 27184 / PCC 6803 / Kazusa)).